A 391-amino-acid chain; its full sequence is Phosphoglycerate kinase (391 aa).

Substrate contacts are provided by residues 21–23, Arg36, 59–62, Arg113, and Arg146; these read DLN and HLGR. ATP is bound by residues Lys197, Glu319, and 345–348; that span reads GGDT.

The protein belongs to the phosphoglycerate kinase family. In terms of assembly, monomer.

It localises to the cytoplasm. It carries out the reaction (2R)-3-phosphoglycerate + ATP = (2R)-3-phospho-glyceroyl phosphate + ADP. It participates in carbohydrate degradation; glycolysis; pyruvate from D-glyceraldehyde 3-phosphate: step 2/5. This chain is Phosphoglycerate kinase, found in Shewanella piezotolerans (strain WP3 / JCM 13877).